We begin with the raw amino-acid sequence, 851 residues long: Beta-galactosidase 3 (851 aa).

An N-terminal signal peptide occupies residues 1 to 29 (MAGASSYFSLRRLLLLLLPLVPLLGATTA). N-linked (GlcNAc...) asparagine glycosylation is present at Asn-35. Glu-194 serves as the catalytic Proton donor. Glu-263 functions as the Nucleophile in the catalytic mechanism. 4 N-linked (GlcNAc...) asparagine glycosylation sites follow: Asn-361, Asn-475, Asn-528, and Asn-533. One can recognise an SUEL-type lectin domain in the interval 765–851 (GRDAAKVQLS…KTLAIEADCS (87 aa)).

The protein belongs to the glycosyl hydrolase 35 family.

It is found in the secreted. The protein localises to the extracellular space. It localises to the apoplast. The enzyme catalyses Hydrolysis of terminal non-reducing beta-D-galactose residues in beta-D-galactosides.. This Oryza sativa subsp. japonica (Rice) protein is Beta-galactosidase 3.